A 502-amino-acid chain; its full sequence is ATP synthase subunit alpha (502 aa).

169-176 provides a ligand contact to ATP; that stretch reads GDRQVGKT.

It belongs to the ATPase alpha/beta chains family. In terms of assembly, F-type ATPases have 2 components, CF(1) - the catalytic core - and CF(0) - the membrane proton channel. CF(1) has five subunits: alpha(3), beta(3), gamma(1), delta(1), epsilon(1). CF(0) has three main subunits: a(1), b(2) and c(9-12). The alpha and beta chains form an alternating ring which encloses part of the gamma chain. CF(1) is attached to CF(0) by a central stalk formed by the gamma and epsilon chains, while a peripheral stalk is formed by the delta and b chains.

Its subcellular location is the cell membrane. The enzyme catalyses ATP + H2O + 4 H(+)(in) = ADP + phosphate + 5 H(+)(out). Functionally, produces ATP from ADP in the presence of a proton gradient across the membrane. The alpha chain is a regulatory subunit. The polypeptide is ATP synthase subunit alpha (Lysinibacillus sphaericus (strain C3-41)).